We begin with the raw amino-acid sequence, 239 residues long: Norbelladine 4'-O-methyltransferase (239 aa).

Residues Val55, Glu77, 79-80 (GV), Ser85, Asp103, and Ala132 contribute to the S-adenosyl-L-methionine site. A divalent metal cation is bound at residue Asp155. Asp157 contributes to the S-adenosyl-L-methionine binding site. A divalent metal cation contacts are provided by Asp181 and Asn182.

Belongs to the class I-like SAM-binding methyltransferase superfamily. Cation-dependent O-methyltransferase family. The cofactor is Mg(2+). Mostly expressed in bulbs, and, to a lower extent, in stems and roots.

The enzyme catalyses norbelladine + S-adenosyl-L-methionine = 4'-O-methylnorbelladine + S-adenosyl-L-homocysteine + H(+). The protein operates within alkaloid biosynthesis. Its function is as follows. 4'-O-methyltransferase converting norbelladine to 4'-O-methylnorbelladine. 4'-O-methylnorbelladine is a precursor to all Amaryllidaceae alkaloids such as galanthamine, lycorine and haemanthamine, and including haemanthamine- and crinamine-type alkaloids, promising anticancer agents. In Narcissus pseudonarcissus (Daffodil), this protein is Norbelladine 4'-O-methyltransferase.